Consider the following 464-residue polypeptide: ATP synthase subunit beta (464 aa).

148–155 (GGAGVGKT) contributes to the ATP binding site.

It belongs to the ATPase alpha/beta chains family. As to quaternary structure, F-type ATPases have 2 components, CF(1) - the catalytic core - and CF(0) - the membrane proton channel. CF(1) has five subunits: alpha(3), beta(3), gamma(1), delta(1), epsilon(1). CF(0) has three main subunits: a(1), b(2) and c(9-12). The alpha and beta chains form an alternating ring which encloses part of the gamma chain. CF(1) is attached to CF(0) by a central stalk formed by the gamma and epsilon chains, while a peripheral stalk is formed by the delta and b chains.

The protein localises to the cell inner membrane. It catalyses the reaction ATP + H2O + 4 H(+)(in) = ADP + phosphate + 5 H(+)(out). Produces ATP from ADP in the presence of a proton gradient across the membrane. The catalytic sites are hosted primarily by the beta subunits. This Marinobacter nauticus (strain ATCC 700491 / DSM 11845 / VT8) (Marinobacter aquaeolei) protein is ATP synthase subunit beta.